Reading from the N-terminus, the 556-residue chain is Formate--tetrahydrofolate ligase (556 aa).

64–71 (TPAGEGKT) provides a ligand contact to ATP.

It belongs to the formate--tetrahydrofolate ligase family.

The catalysed reaction is (6S)-5,6,7,8-tetrahydrofolate + formate + ATP = (6R)-10-formyltetrahydrofolate + ADP + phosphate. Its pathway is one-carbon metabolism; tetrahydrofolate interconversion. The protein is Formate--tetrahydrofolate ligase of Haemophilus ducreyi (strain 35000HP / ATCC 700724).